The following is a 262-amino-acid chain: tRNA pseudouridine synthase B (262 aa).

Catalysis depends on aspartate 77, which acts as the Nucleophile.

Belongs to the pseudouridine synthase TruB family. Type 1 subfamily.

The catalysed reaction is uridine(55) in tRNA = pseudouridine(55) in tRNA. In terms of biological role, responsible for synthesis of pseudouridine from uracil-55 in the psi GC loop of transfer RNAs. This is tRNA pseudouridine synthase B from Protochlamydia amoebophila (strain UWE25).